Reading from the N-terminus, the 362-residue chain is O-methyltransferase 13 (362 aa).

Positions 181, 205, 228, 248, and 262 each coordinate S-adenosyl-L-homocysteine. D228 contributes to the S-adenosyl-L-methionine binding site. H266 functions as the Proton acceptor in the catalytic mechanism.

This sequence belongs to the class I-like SAM-binding methyltransferase superfamily. Cation-independent O-methyltransferase family. As to quaternary structure, homodimer. Mainly expressed in vascular and cortical tissues.

It catalyses the reaction dopamine + S-adenosyl-L-methionine = 3-methoxytyramine + S-adenosyl-L-homocysteine + H(+). It participates in aromatic compound metabolism. It functions in the pathway alkaloid biosynthesis. In terms of biological role, O-methyltransferase participating in the biosynthesis of natural products derived from phenylethylamine, including mescaline, a natural hallucinogen potentially used in psychotherapeutic treatments. Catalyzes the O-methylation of dopamine and 4,5-dihydroxy-3-methoxyphenethylamine. This chain is O-methyltransferase 13, found in Lophophora williamsii (Peyote).